Reading from the N-terminus, the 307-residue chain is Ribosomal RNA small subunit methyltransferase H (307 aa).

S-adenosyl-L-methionine contacts are provided by residues 33–35 (GGY), D51, F78, D96, and Q103.

Belongs to the methyltransferase superfamily. RsmH family.

The protein localises to the cytoplasm. The catalysed reaction is cytidine(1402) in 16S rRNA + S-adenosyl-L-methionine = N(4)-methylcytidine(1402) in 16S rRNA + S-adenosyl-L-homocysteine + H(+). Functionally, specifically methylates the N4 position of cytidine in position 1402 (C1402) of 16S rRNA. This Rickettsia conorii (strain ATCC VR-613 / Malish 7) protein is Ribosomal RNA small subunit methyltransferase H.